Here is an 87-residue protein sequence, read N- to C-terminus: Keratin-associated protein 7-1 (87 aa).

The tract at residues 43–84 is 11 X 2 AA repeats of G-[YCGS]; the sequence is GCGCNGYSSLGYSFGGSNINNLGGCYGGSFYRPWGSGSGFGY.

Belongs to the KRTAP type 7 family. In terms of assembly, interacts with hair keratins. Expressed in the upper portion of the hair cortex.

Its function is as follows. In the hair cortex, hair keratin intermediate filaments are embedded in an interfilamentous matrix, consisting of hair keratin-associated proteins (KRTAP), which are essential for the formation of a rigid and resistant hair shaft through their extensive disulfide bond cross-linking with abundant cysteine residues of hair keratins. The matrix proteins include the high-sulfur and high-glycine-tyrosine keratins. This is Keratin-associated protein 7-1 (KRTAP7-1) from Homo sapiens (Human).